The sequence spans 396 residues: Gap junction gamma-1 protein (396 aa).

The Cytoplasmic segment spans residues 1–18 (MSWSFLTRLLEEIHNHST). A helical membrane pass occupies residues 19 to 39 (FVGKIWLTVLIVFRIVLTAVG). Residues 40-75 (GESIYYDEQSKFVCNTEQPGCENVCYDAFAPLSHVR) lie on the Extracellular side of the membrane. A helical membrane pass occupies residues 76 to 96 (FWVFQIILVATPSVMYLGYAI). Topologically, residues 97-175 (HKIAKMEHGE…RRIREDGLMK (79 aa)) are cytoplasmic. The tract at residues 145–165 (ELESEKENKEQSQPKPKHDGR) is disordered. A compositionally biased stretch (basic and acidic residues) spans 147-156 (ESEKENKEQS). The chain crosses the membrane as a helical span at residues 176–198 (IYVLQLLARTVFEVGFLIGQYFL). The Extracellular segment spans residues 199 to 229 (YGFQVHPFYVCSRLPCPHKIDCFISRPTEKT). Residues 230 to 250 (IFLLIMYGVTGLCLLLNIWEM) traverse the membrane as a helical segment. At 251–396 (LHLGFGTIRD…SGDGKTSVWI (146 aa)) the chain is on the cytoplasmic side. Residues 303–358 (ELSNAKIAYKQNKANIAQEQQYGSHEEHLPADLETLQREIRMAQERLDLAIQAYHH) adopt a coiled-coil conformation. Residues 357-396 (HHQNNPHGPREKKAKVGSKSGSNKSSISSKSGDGKTSVWI) are disordered. The segment covering 373-396 (GSKSGSNKSSISSKSGDGKTSVWI) has biased composition (low complexity).

Belongs to the connexin family. Gamma-type subfamily. In terms of assembly, a connexon is composed of a hexamer of connexins. Interacts with CNST.

It is found in the cell membrane. It localises to the cell junction. The protein localises to the gap junction. Functionally, one gap junction consists of a cluster of closely packed pairs of transmembrane channels, the connexons, through which materials of low MW diffuse from one cell to a neighboring cell. The sequence is that of Gap junction gamma-1 protein (GJC1) from Cricetulus griseus (Chinese hamster).